The following is a 566-amino-acid chain: Amidophosphoribosyltransferase 1, chloroplastic (566 aa).

Low complexity predominate over residues 1 to 13; it reads MAATTSFSSSLSL. Disordered regions lie at residues 1 to 28 and 58 to 87; these read MAAT…QPLP and VSSY…DEKP. A chloroplast-targeting transit peptide spans 1–58; the sequence is MAATTSFSSSLSLITKPNNSSYTNQPLPLFPKPFLKPPHLSLLPSPLSSPPPSLIHGV. Polar residues predominate over residues 15–25; that stretch reads TKPNNSSYTNQ. Low complexity predominate over residues 59 to 68; that stretch reads SSYFSSPSPS. Residues 70–87 are compositionally biased toward basic and acidic residues; sequence DNSHTPFDYHNDEDDEKP. Residue cysteine 91 is the Nucleophile of the active site. The region spanning 91-311 is the Glutamine amidotransferase type-2 domain; it reads CGVVGIYGDP…PGEVLVVDKD (221 aa). Cysteine 327, cysteine 473, cysteine 524, and cysteine 527 together coordinate [4Fe-4S] cluster.

This sequence in the C-terminal section; belongs to the purine/pyrimidine phosphoribosyltransferase family. It depends on [4Fe-4S] cluster as a cofactor. The cofactor is Mg(2+). In terms of tissue distribution, expressed in flowers and roots. Also present in leaves, and, to a lower extent, in cotyledons.

It localises to the plastid. The protein resides in the chloroplast stroma. It catalyses the reaction 5-phospho-beta-D-ribosylamine + L-glutamate + diphosphate = 5-phospho-alpha-D-ribose 1-diphosphate + L-glutamine + H2O. Its pathway is purine metabolism; IMP biosynthesis via de novo pathway; N(1)-(5-phospho-D-ribosyl)glycinamide from 5-phospho-alpha-D-ribose 1-diphosphate: step 1/2. In terms of biological role, catalyzes the first committed step of 'de novo' purine biosynthesis from glutamine. Involved in plastid biogenesis and cell division. This is Amidophosphoribosyltransferase 1, chloroplastic (ASE1) from Arabidopsis thaliana (Mouse-ear cress).